A 384-amino-acid polypeptide reads, in one-letter code: Shufflon-specific DNA recombinase (384 aa).

Residues 9 to 96 (MSLSRALDKY…LLSSLFNIAR (88 aa)) enclose the Core-binding (CB) domain. Positions 118 to 284 (GRDRRLTSSE…RAWQLVSKLD (167 aa)) constitute a Tyr recombinase domain. Catalysis depends on residues arginine 155, lysine 180, histidine 235, arginine 238, and histidine 262. Tyrosine 271 functions as the O-(3'-phospho-DNA)-tyrosine intermediate in the catalytic mechanism.

The protein belongs to the 'phage' integrase family.

Functionally, shufflon-specific DNA recombinase. The polypeptide is Shufflon-specific DNA recombinase (rci) (Escherichia coli).